The primary structure comprises 431 residues: Serine hydroxymethyltransferase (431 aa).

(6S)-5,6,7,8-tetrahydrofolate-binding positions include leucine 127 and 131–133 (GHL). Lysine 236 bears the N6-(pyridoxal phosphate)lysine mark.

It belongs to the SHMT family. In terms of assembly, homodimer. Requires pyridoxal 5'-phosphate as cofactor.

The protein localises to the cytoplasm. The enzyme catalyses (6R)-5,10-methylene-5,6,7,8-tetrahydrofolate + glycine + H2O = (6S)-5,6,7,8-tetrahydrofolate + L-serine. It functions in the pathway one-carbon metabolism; tetrahydrofolate interconversion. Its pathway is amino-acid biosynthesis; glycine biosynthesis; glycine from L-serine: step 1/1. Its function is as follows. Catalyzes the reversible interconversion of serine and glycine with tetrahydrofolate (THF) serving as the one-carbon carrier. This reaction serves as the major source of one-carbon groups required for the biosynthesis of purines, thymidylate, methionine, and other important biomolecules. Also exhibits THF-independent aldolase activity toward beta-hydroxyamino acids, producing glycine and aldehydes, via a retro-aldol mechanism. This is Serine hydroxymethyltransferase from Granulibacter bethesdensis (strain ATCC BAA-1260 / CGDNIH1).